The sequence spans 441 residues: 5-methylthioadenosine/S-adenosylhomocysteine deaminase (441 aa).

Positions 70 and 72 each coordinate Zn(2+). Substrate contacts are provided by Glu99 and His191. Residue His218 participates in Zn(2+) binding. 2 residues coordinate substrate: Glu221 and Asp306. Residue Asp306 coordinates Zn(2+).

This sequence belongs to the metallo-dependent hydrolases superfamily. MTA/SAH deaminase family. Zn(2+) serves as cofactor.

It catalyses the reaction S-adenosyl-L-homocysteine + H2O + H(+) = S-inosyl-L-homocysteine + NH4(+). It carries out the reaction S-methyl-5'-thioadenosine + H2O + H(+) = S-methyl-5'-thioinosine + NH4(+). In terms of biological role, catalyzes the deamination of 5-methylthioadenosine and S-adenosyl-L-homocysteine into 5-methylthioinosine and S-inosyl-L-homocysteine, respectively. Is also able to deaminate adenosine. The chain is 5-methylthioadenosine/S-adenosylhomocysteine deaminase from Lawsonia intracellularis (strain PHE/MN1-00).